Reading from the N-terminus, the 147-residue chain is Transcriptional regulator MraZ (147 aa).

SpoVT-AbrB domains follow at residues 6-48 (NFER…NSEE) and 77-120 (TVEV…SKAK).

The protein belongs to the MraZ family. In terms of assembly, forms oligomers.

It localises to the cytoplasm. Its subcellular location is the nucleoid. The polypeptide is Transcriptional regulator MraZ (Mycoplasmopsis pulmonis (strain UAB CTIP) (Mycoplasma pulmonis)).